Consider the following 173-residue polypeptide: Small ribosomal subunit protein uS5 (173 aa).

The S5 DRBM domain maps to 17–80 (WQERVIQIRR…ADGKKQLIDV (64 aa)).

This sequence belongs to the universal ribosomal protein uS5 family. As to quaternary structure, part of the 30S ribosomal subunit. Contacts proteins S4 and S8.

Its function is as follows. With S4 and S12 plays an important role in translational accuracy. In terms of biological role, located at the back of the 30S subunit body where it stabilizes the conformation of the head with respect to the body. This Rippkaea orientalis (strain PCC 8801 / RF-1) (Cyanothece sp. (strain PCC 8801)) protein is Small ribosomal subunit protein uS5.